We begin with the raw amino-acid sequence, 406 residues long: GTPase Obg (406 aa).

The region spanning 1 to 159 (MRFVDEAVIT…REIRLELKVL (159 aa)) is the Obg domain. The segment at 120-143 (GGEGGLGNTHFKSSTNRAPRKCTT) is disordered. One can recognise an OBG-type G domain in the interval 160–333 (ADVGLLGMPN…VVYYLMDQIE (174 aa)). GTP-binding positions include 166-173 (GMPNAGKS), 191-195 (FTTMV), 213-216 (DIPG), 283-286 (NKLD), and 314-316 (SGL). Ser173 and Thr193 together coordinate Mg(2+). The disordered stretch occupies residues 381 to 406 (ESMMDDDDDFDDDEDDGDVESIYVRD). Positions 383 to 399 (MMDDDDDFDDDEDDGDV) are enriched in acidic residues.

The protein belongs to the TRAFAC class OBG-HflX-like GTPase superfamily. OBG GTPase family. In terms of assembly, monomer. Mg(2+) serves as cofactor.

Its subcellular location is the cytoplasm. Functionally, an essential GTPase which binds GTP, GDP and possibly (p)ppGpp with moderate affinity, with high nucleotide exchange rates and a fairly low GTP hydrolysis rate. Plays a role in control of the cell cycle, stress response, ribosome biogenesis and in those bacteria that undergo differentiation, in morphogenesis control. The protein is GTPase Obg of Acinetobacter baumannii (strain ACICU).